Reading from the N-terminus, the 346-residue chain is GTPase Obg (346 aa).

Positions 1–159 constitute an Obg domain; sequence MKFLDEAKVY…RWIWLRLKLI (159 aa). In terms of domain architecture, OBG-type G spans 160–327; sequence ADAGLVGLPN…ALRALVAVIG (168 aa). Residues 166–173, 191–195, 212–215, 279–282, and 308–310 contribute to the GTP site; these read GLPNAGKS, FTTLH, DIPG, NKID, and SAA. Mg(2+) contacts are provided by Ser-173 and Thr-193.

This sequence belongs to the TRAFAC class OBG-HflX-like GTPase superfamily. OBG GTPase family. In terms of assembly, monomer. Requires Mg(2+) as cofactor.

The protein localises to the cytoplasm. Functionally, an essential GTPase which binds GTP, GDP and possibly (p)ppGpp with moderate affinity, with high nucleotide exchange rates and a fairly low GTP hydrolysis rate. Plays a role in control of the cell cycle, stress response, ribosome biogenesis and in those bacteria that undergo differentiation, in morphogenesis control. In Bradyrhizobium diazoefficiens (strain JCM 10833 / BCRC 13528 / IAM 13628 / NBRC 14792 / USDA 110), this protein is GTPase Obg.